The primary structure comprises 149 residues: Large ribosomal subunit protein bL9 (149 aa).

Belongs to the bacterial ribosomal protein bL9 family.

Functionally, binds to the 23S rRNA. The polypeptide is Large ribosomal subunit protein bL9 (Cutibacterium acnes (strain DSM 16379 / KPA171202) (Propionibacterium acnes)).